The primary structure comprises 447 residues: NADH-ubiquinone oxidoreductase chain 4 (447 aa).

Helical transmembrane passes span 28 to 48 (IFLA…FCDI), 56 to 76 (MISY…LMAS), 85 to 105 (YVNL…FTFS), 110 to 130 (FMFY…ILGW), 141 to 161 (IYLL…IFYI), 183 to 203 (FLYL…LVHL), 213 to 233 (PVSG…YGLL), 246 to 266 (FNYI…LICL), 273 to 293 (ALIA…LMTM), 301 to 321 (SYTL…LANI), 343 to 365 (SLSL…LNLL), 380 to 400 (LTMI…LYLF), and 409 to 431 (YSGV…LHWL).

Belongs to the complex I subunit 4 family.

The protein resides in the mitochondrion membrane. It catalyses the reaction a ubiquinone + NADH + 5 H(+)(in) = a ubiquinol + NAD(+) + 4 H(+)(out). Its function is as follows. Core subunit of the mitochondrial membrane respiratory chain NADH dehydrogenase (Complex I) that is believed to belong to the minimal assembly required for catalysis. Complex I functions in the transfer of electrons from NADH to the respiratory chain. The immediate electron acceptor for the enzyme is believed to be ubiquinone. This chain is NADH-ubiquinone oxidoreductase chain 4, found in Aedes aegypti (Yellowfever mosquito).